The sequence spans 397 residues: Succinate--CoA ligase [ADP-forming] subunit beta (397 aa).

One can recognise an ATP-grasp domain in the interval 9–244 (KEIMKQYGIS…LTEEDPREVQ (236 aa)). ATP is bound by residues Lys46, 53–55 (GRG), Glu99, Leu102, and Glu107. Residues Asn199 and Asp213 each contribute to the Mg(2+) site. Substrate-binding positions include Asn264 and 321–323 (GIM).

Belongs to the succinate/malate CoA ligase beta subunit family. Heterotetramer of two alpha and two beta subunits. Mg(2+) serves as cofactor.

The enzyme catalyses succinate + ATP + CoA = succinyl-CoA + ADP + phosphate. It catalyses the reaction GTP + succinate + CoA = succinyl-CoA + GDP + phosphate. It functions in the pathway carbohydrate metabolism; tricarboxylic acid cycle; succinate from succinyl-CoA (ligase route): step 1/1. Its function is as follows. Succinyl-CoA synthetase functions in the citric acid cycle (TCA), coupling the hydrolysis of succinyl-CoA to the synthesis of either ATP or GTP and thus represents the only step of substrate-level phosphorylation in the TCA. The beta subunit provides nucleotide specificity of the enzyme and binds the substrate succinate, while the binding sites for coenzyme A and phosphate are found in the alpha subunit. This Alkaliphilus metalliredigens (strain QYMF) protein is Succinate--CoA ligase [ADP-forming] subunit beta.